The primary structure comprises 161 residues: Large ribosomal subunit protein uL10 (161 aa).

The protein belongs to the universal ribosomal protein uL10 family. In terms of assembly, part of the ribosomal stalk of the 50S ribosomal subunit. The N-terminus interacts with L11 and the large rRNA to form the base of the stalk. The C-terminus forms an elongated spine to which L12 dimers bind in a sequential fashion forming a multimeric L10(L12)X complex.

Its function is as follows. Forms part of the ribosomal stalk, playing a central role in the interaction of the ribosome with GTP-bound translation factors. The sequence is that of Large ribosomal subunit protein uL10 from Campylobacter curvus (strain 525.92).